Here is a 302-residue protein sequence, read N- to C-terminus: F-box protein SKIP19 (302 aa).

The region spanning 16-63 (STNWTELPPELTSAILHRLGAIEILENAQKVCRSWRRVCKDPSMWRKI) is the F-box domain.

In terms of assembly, part of a SCF (ASK-cullin-F-box) protein ligase complex. Interacts with CUL1 and SPK1B/ASK2.

Its subcellular location is the nucleus. It participates in protein modification; protein ubiquitination. Functionally, component of SCF(ASK-cullin-F-box) E3 ubiquitin ligase complexes, which may mediate the ubiquitination and subsequent proteasomal degradation of target proteins. This is F-box protein SKIP19 (SKIP19) from Arabidopsis thaliana (Mouse-ear cress).